A 1143-amino-acid chain; its full sequence is FH2 domain-containing protein 1 (1143 aa).

The disordered stretch occupies residues Gly-16–Ser-89. Pro residues-rich tracts occupy residues Thr-29–Pro-46 and Ser-56–Pro-80. One can recognise an FH2 domain in the interval Gly-87–Gln-482. Ser-500 carries the phosphoserine modification. Residues Pro-517–Arg-638 are disordered. A compositionally biased stretch (low complexity) spans Pro-521 to Pro-534. Ser-650, Ser-660, and Ser-664 each carry phosphoserine. A disordered region spans residues Leu-706–Lys-1143. The span at Gly-806 to Ser-818 shows a compositional bias: low complexity. A compositionally biased stretch (basic and acidic residues) spans Leu-848 to Ala-861. The segment covering Arg-925–Arg-947 has biased composition (polar residues). The span at Pro-958 to Arg-968 shows a compositional bias: low complexity. Residues Gly-960–Leu-1086 form an MTBD; microtubule-binding domain region. The segment covering Gln-995 to Lys-1018 has biased composition (basic and acidic residues). Over residues Ala-1036–Ser-1046 the composition is skewed to polar residues. Basic and acidic residues-rich tracts occupy residues Val-1071–Pro-1080 and Gly-1117–Ser-1130.

As to quaternary structure, interacts with CEP170.

It localises to the cell projection. It is found in the cilium. The protein resides in the golgi apparatus. Functionally, microtubule-associated formin which regulates both actin and microtubule dynamics. Induces microtubule acetylation and stabilization and actin stress fiber formation. Regulates Golgi ribbon formation. Required for normal cilia assembly. Early in cilia assembly, may assist in the maturation and positioning of the centrosome/basal body, and once cilia assembly has initiated, may also promote cilia elongation by inhibiting disassembly. The protein is FH2 domain-containing protein 1 (FHDC1) of Homo sapiens (Human).